A 155-amino-acid polypeptide reads, in one-letter code: Chromosomal passenger complex protein bir-1 (155 aa).

The stretch at 20–87 is one BIR repeat; sequence RLMTFKNFEY…KRDEPCEFVR (68 aa). The Zn(2+) site is built by C57, C60, H76, and C83.

This sequence belongs to the IAP family. As to quaternary structure, component of the CPC complex which consists of icp-1; csc-1; bir-1 and air-2. Within the complex, interacts with csc-1, icp-1 and air-2. Interacts with csc-1 in a zinc-dependent-manner; the interaction is direct. Expressed in oocytes and sperm.

The protein localises to the chromosome. It is found in the cytoplasm. It localises to the cytoskeleton. Its subcellular location is the spindle. The protein resides in the midbody. Its function is as follows. Component of the chromosomal passenger complex (CPC), a complex that acts as a key regulator of chromosome segregation and cytokinesis. The CPC complex has essential functions at the centromere in ensuring correct chromosome condensation, alignment and segregation. In the complex, required to direct the Aurora B/air-2 kinase to chromosomes. Also functions in spindle midzone formation and in the formation of polar bodies during oogenesis. Required for the localization of the kinetochore component hcp-1 to chromosomes. Involved in the positive regulation of transcription. Involved in the transcriptional regulation of collagen genes. In Caenorhabditis elegans, this protein is Chromosomal passenger complex protein bir-1.